The primary structure comprises 194 residues: Fe/S biogenesis protein NfuA (194 aa).

Cysteine 151 and cysteine 154 together coordinate [4Fe-4S] cluster.

The protein belongs to the NfuA family. As to quaternary structure, homodimer. The cofactor is [4Fe-4S] cluster.

Involved in iron-sulfur cluster biogenesis. Binds a 4Fe-4S cluster, can transfer this cluster to apoproteins, and thereby intervenes in the maturation of Fe/S proteins. Could also act as a scaffold/chaperone for damaged Fe/S proteins. This chain is Fe/S biogenesis protein NfuA, found in Mannheimia succiniciproducens (strain KCTC 0769BP / MBEL55E).